The sequence spans 333 residues: Transcription factor HHO6 (333 aa).

The HTH myb-type domain maps to 189 to 249 (ALRKQRRCWN…HLQKYRLHIR (61 aa)). Residues 220 to 245 (PKQIREHMQEEGLTNDEVKSHLQKYR) constitute a DNA-binding region (H-T-H motif). The interval 274–333 (DEEETCEGGESLKRSNAQSDSPQGPLQLPSTTTTTGGDSSMEDVEDAKSESFQLERLRSP) is disordered. A compositionally biased stretch (polar residues) spans 287-303 (RSNAQSDSPQGPLQLPS). Residues 319–333 (DAKSESFQLERLRSP) show a composition bias toward basic and acidic residues.

It localises to the nucleus. Functionally, probable transcription factor involved in phosphate signaling in roots. The protein is Transcription factor HHO6 of Arabidopsis thaliana (Mouse-ear cress).